We begin with the raw amino-acid sequence, 325 residues long: Phospholipid phosphatase-related protein type 1 (325 aa).

N-linked (GlcNAc...) asparagine glycosylation occurs at Asn5. The next 3 membrane-spanning stretches (helical) occupy residues 13–33 (IIPC…LLAY), 67–87 (FISP…IIFI), and 127–147 (FIGV…AGQV). The N-linked (GlcNAc...) asparagine glycan is linked to Asn163. Helical transmembrane passes span 201-219 (AALS…TSTI), 226-244 (LAKP…LTGL), and 257-277 (VIAG…CVVH). Ser307 is subject to Phosphoserine. Asn316 is a glycosylation site (N-linked (GlcNAc...) asparagine).

The protein belongs to the PA-phosphatase related phosphoesterase family. Highly expressed in the brain. Also found in the liver, kidney and testis. In the brain shows a strongest expression in the hippocampus and cerebellum.

The protein localises to the cell membrane. Its subcellular location is the cell projection. It is found in the neuron projection. Functionally, may play a role in neurite outgrowth and neurogenesis. The chain is Phospholipid phosphatase-related protein type 1 from Rattus norvegicus (Rat).